We begin with the raw amino-acid sequence, 389 residues long: 2-aminoethylphosphonate--pyruvate transaminase 1 (389 aa).

Lysine 196 is subject to N6-(pyridoxal phosphate)lysine.

It belongs to the class-V pyridoxal-phosphate-dependent aminotransferase family. PhnW subfamily. In terms of assembly, homodimer. Pyridoxal 5'-phosphate serves as cofactor.

The catalysed reaction is (2-aminoethyl)phosphonate + pyruvate = phosphonoacetaldehyde + L-alanine. Functionally, involved in phosphonate degradation. This is 2-aminoethylphosphonate--pyruvate transaminase 1 from Paraburkholderia xenovorans (strain LB400).